Reading from the N-terminus, the 484-residue chain is tRNA sulfurtransferase (484 aa).

The THUMP domain occupies 61–166 (PHLIELLQCI…DKLLFIQARH (106 aa)). ATP contacts are provided by residues 183–184 (LI), Lys265, Gly287, and Gln296. Cys344 and Cys456 form a disulfide bridge. One can recognise a Rhodanese domain in the interval 404-483 (LGENDVILDI…FNNVQVFVKA (80 aa)). Cys456 acts as the Cysteine persulfide intermediate in catalysis.

It belongs to the ThiI family.

Its subcellular location is the cytoplasm. It carries out the reaction [ThiI sulfur-carrier protein]-S-sulfanyl-L-cysteine + a uridine in tRNA + 2 reduced [2Fe-2S]-[ferredoxin] + ATP + H(+) = [ThiI sulfur-carrier protein]-L-cysteine + a 4-thiouridine in tRNA + 2 oxidized [2Fe-2S]-[ferredoxin] + AMP + diphosphate. The catalysed reaction is [ThiS sulfur-carrier protein]-C-terminal Gly-Gly-AMP + S-sulfanyl-L-cysteinyl-[cysteine desulfurase] + AH2 = [ThiS sulfur-carrier protein]-C-terminal-Gly-aminoethanethioate + L-cysteinyl-[cysteine desulfurase] + A + AMP + 2 H(+). The protein operates within cofactor biosynthesis; thiamine diphosphate biosynthesis. Functionally, catalyzes the ATP-dependent transfer of a sulfur to tRNA to produce 4-thiouridine in position 8 of tRNAs, which functions as a near-UV photosensor. Also catalyzes the transfer of sulfur to the sulfur carrier protein ThiS, forming ThiS-thiocarboxylate. This is a step in the synthesis of thiazole, in the thiamine biosynthesis pathway. The sulfur is donated as persulfide by IscS. The protein is tRNA sulfurtransferase of Actinobacillus succinogenes (strain ATCC 55618 / DSM 22257 / CCUG 43843 / 130Z).